The sequence spans 242 residues: Probable ABC transporter ATP-binding protein PEB1C (242 aa).

In terms of domain architecture, ABC transporter spans 2–236; the sequence is IELKNVNKYY…PKTERARLFL (235 aa). An ATP-binding site is contributed by 34-41; sequence GPSGSGKS.

The protein belongs to the ABC transporter superfamily.

The protein localises to the cell inner membrane. In terms of biological role, most probably involved, with PEB1, in a binding-protein-dependent transport system for an amino acid. Probably responsible for energy coupling to the transport system. The chain is Probable ABC transporter ATP-binding protein PEB1C (peb1C) from Campylobacter jejuni subsp. jejuni serotype O:2 (strain ATCC 700819 / NCTC 11168).